Here is a 1211-residue protein sequence, read N- to C-terminus: Transient receptor potential cation channel subfamily A member 1 homolog (1211 aa).

Residues 1–811 lie on the Cytoplasmic side of the membrane; the sequence is MSKKSLGLDV…LKYKWNRLGR (811 aa). 17 ANK repeats span residues 49 to 79, 83 to 112, 116 to 169, 173 to 202, 206 to 235, 239 to 270, 277 to 306, 311 to 340, 344 to 374, 378 to 407, 411 to 440, 473 to 502, 506 to 535, 540 to 569, 573 to 602, 605 to 634, and 638 to 669; these read NLRSIIHQSAREGNVNALQEALLKAPLAVNA, DFMTPLHYAARYGNYDAVKLLLSKNALPNT, EGDT…EIDP, YQLTPLHYAAMKSNFSALHALIKLKADVDA, NKMTPLLLACVHGSQEIIQELIKANSNVTK, RLNTVFHIVALRGEPEYLEMMMDHDPVEAIKA, EKKTPLRMAVEGNHPETLKKILQMEKKNSC, REKELIHFAAEKGFLEVLKALVEAGGNKNE, VKAVPLHVAAQMNQLEVVSYLIEEEKDNIDV, QGLTPLMMAVTHDSKKCVEYLIAKKANLTI, DERTPVFIGAKFNALSSVEYILDHLRKKNK, DQNTPMHIVASNGYLEMMQLLQKHGASITQ, DEETALHRAAIGGQTGAVRQLLEWDIRLLL, MGNSALHLAARSGHDATTKVLLDNGADKEA, YQKTPLQVAVDSGKLETCQRLVAKGAQIES, DTKTVLHTAAFYGNESIVRYFIAEGVTIDR, and EGKTAFDIACENDHKDVARAFLETDQWKNLMI. A helical membrane pass occupies residues 812-832; it reads PMYYFALFMYLVFIVSLTQYV. The Extracellular portion of the chain corresponds to 833–870; that stretch reads RHTKAPYNVWNEESYYDSEYFDENETCPQINTTKPDVV. Residues Asn856 and Asn863 are each glycosylated (N-linked (GlcNAc...) asparagine). The helical transmembrane segment at 871 to 891 threads the bilayer; sequence WKIIIQTLAVCQILVECFQLF. Residues 892-894 lie on the Cytoplasmic side of the membrane; it reads QRK. Residues 895-915 traverse the membrane as a helical segment; sequence FAYLVNWENWIDCFIYSTALI. The Extracellular segment spans residues 916 to 932; that stretch reads TVYDFSECSATSGVRQN. A helical transmembrane segment spans residues 933–953; the sequence is WQWILAALCIFFGWINLLFMI. Residues 954-975 are Cytoplasmic-facing; the sequence is RKMPRFGIFVVMFVDIVKTFFR. The chain crosses the membrane as a helical span at residues 976-996; sequence FFPVFVLFIIAFSSSFYVILQ. The Extracellular segment spans residues 997 to 1004; that stretch reads NRPEFSTI. The segment at residues 1005 to 1025 is an intramembrane region (pore-forming); it reads FMSPLKTTVMMIGEFEFTGIF. Residues 1026–1048 lie on the Extracellular side of the membrane; it reads HGDETTHAEKMFGPAHTAVACAL. A helical transmembrane segment spans residues 1049–1069; it reads FFFFCIIMTILLMNLLVGLAV. The Cytoplasmic portion of the chain corresponds to 1070 to 1193; it reads DDIKGVQEKA…EKQVRLEAII (124 aa). The stretch at 1149–1191 forms a coiled coil; sequence EMYEREAEFTSEMTQKLQNQAAKLKNIQENIDVMYEKQVRLEA.

This sequence belongs to the transient receptor (TC 1.A.4) family. As to quaternary structure, homotetramer. Expressed in many sensory neurons, including OLQ and IL1 neurons.

The protein resides in the cell membrane. Its function is as follows. Receptor-activated non-selective cation channel involved in the nose-touch response and foraging behavior. Contributes to the neural responses of sensory neurons to touch, particularly after repeated mechanical stimulation. Has no apparent role in thermosensory or chemosensory behaviors. This Caenorhabditis elegans protein is Transient receptor potential cation channel subfamily A member 1 homolog (trpa-1).